The following is a 719-amino-acid chain: Acyl-coenzyme A oxidase (719 aa).

The Microbody targeting signal signature appears at 716–719 (APKI).

This sequence belongs to the acyl-CoA oxidase family. FAD is required as a cofactor.

The protein resides in the peroxisome. It carries out the reaction a 2,3-saturated acyl-CoA + O2 = a (2E)-enoyl-CoA + H2O2. It participates in lipid metabolism; peroxisomal fatty acid beta-oxidation. In Komagataella pastoris (Yeast), this protein is Acyl-coenzyme A oxidase (POX1).